The chain runs to 705 residues: Elongation factor G (705 aa).

Residues 8-291 (EKVRNIGIMA…AVVEYLPSPI (284 aa)) enclose the tr-type G domain. GTP contacts are provided by residues 17 to 24 (AHIDAGKT), 90 to 94 (DTPGH), and 144 to 147 (NKMD).

The protein belongs to the TRAFAC class translation factor GTPase superfamily. Classic translation factor GTPase family. EF-G/EF-2 subfamily.

The protein resides in the cytoplasm. Functionally, catalyzes the GTP-dependent ribosomal translocation step during translation elongation. During this step, the ribosome changes from the pre-translocational (PRE) to the post-translocational (POST) state as the newly formed A-site-bound peptidyl-tRNA and P-site-bound deacylated tRNA move to the P and E sites, respectively. Catalyzes the coordinated movement of the two tRNA molecules, the mRNA and conformational changes in the ribosome. This is Elongation factor G from Chloroherpeton thalassium (strain ATCC 35110 / GB-78).